Reading from the N-terminus, the 430-residue chain is Probable transporter SCO4007 (430 aa).

Over residues 1 to 17 (MPSSPSSTTPAPTSTPA) the composition is skewed to low complexity. Positions 1–26 (MPSSPSSTTPAPTSTPAARREPSGKG) are disordered. 11 helical membrane passes run 34 to 54 (LFLP…YLAA), 70 to 90 (AVAW…LFFA), 101 to 121 (LVAA…ASAG), 126 to 146 (AGAV…VPLV), 159 to 179 (VAAV…LGGL), 188 to 208 (AVFV…AYIL), 244 to 264 (AGMY…LTEG), 275 to 295 (GLFG…GGLV), 315 to 335 (VPLF…AVLV), 362 to 382 (TAYV…AGPA), and 383 to 403 (FGHW…VLGW).

This sequence belongs to the major facilitator superfamily.

It is found in the cell membrane. This Streptomyces coelicolor (strain ATCC BAA-471 / A3(2) / M145) protein is Probable transporter SCO4007.